The chain runs to 244 residues: Triosephosphate isomerase (244 aa).

Position 8–10 (Asn-8–Lys-10) interacts with substrate. The active-site Electrophile is the His-93. Glu-161 serves as the catalytic Proton acceptor. Substrate is bound by residues Gly-167, Ser-206, and Gly-227–Gly-228.

The protein belongs to the triosephosphate isomerase family. As to quaternary structure, homodimer.

It localises to the cytoplasm. The catalysed reaction is D-glyceraldehyde 3-phosphate = dihydroxyacetone phosphate. Its pathway is carbohydrate biosynthesis; gluconeogenesis. It functions in the pathway carbohydrate degradation; glycolysis; D-glyceraldehyde 3-phosphate from glycerone phosphate: step 1/1. Its function is as follows. Involved in the gluconeogenesis. Catalyzes stereospecifically the conversion of dihydroxyacetone phosphate (DHAP) to D-glyceraldehyde-3-phosphate (G3P). This Deinococcus radiodurans (strain ATCC 13939 / DSM 20539 / JCM 16871 / CCUG 27074 / LMG 4051 / NBRC 15346 / NCIMB 9279 / VKM B-1422 / R1) protein is Triosephosphate isomerase.